The following is a 435-amino-acid chain: Exopolysaccharide production protein ExoQ (435 aa).

10 consecutive transmembrane segments (helical) span residues 11–31, 35–55, 65–85, 117–137, 156–176, 178–198, 203–223, 230–250, 325–345, and 361–381; these read PGAN…VFAY, FGQV…LVDY, YLWI…SAAP, GMIA…TYHY, LGFY…VLGE, GLWM…LLTS, SVLT…ITAL, LLFI…IYAG, VVET…TAFF, and MVLF…IDIL.

It is found in the cell membrane. The protein operates within glycan metabolism; exopolysaccharide biosynthesis. In terms of biological role, involved in the production of exopolysaccharide. The sequence is that of Exopolysaccharide production protein ExoQ (exoQ) from Rhizobium meliloti (strain 1021) (Ensifer meliloti).